We begin with the raw amino-acid sequence, 469 residues long: MDNRNTQMYTEEEKTVNPFLPSTPGPKKAKGGGEAVETHPAPGPLPPPEVRDIGERREPDRAQQQPQKPAVAAGTQSLGNFRQGFMKCLLEVEKMEASHRRASKARSQTAQKSPRTLTPVPTSAPSLPQTPASVPASGPSWARLPAPGPEPAPMGAPVPTSMPCPVLLGPALDLGWRRMELLHQSSERTLSYAKARQEPEEQSLQKLYQNREKSEEQLTLKQEEAFRSYFEIFNGPGEVDAQSLKNILLLMGFSVTLAQVEDALMSADVNGDGRVDFKDFLAVMTDTRRFFCSVEQNALSDMAPHNPHTLLFEILSLLVEMLALPEAVLEEITNYYQKKLKEGTCKAQEMEAAVGRLRLQKLPYNPQQEESSEVPERKVLSILSRLKQQNYAPNLQSPYAQVPCILLCPQLDKKMVRRQPSNHYALDQCTPPGLDPDIRSPFFQSGSQGNREHNSDSRKWLSSVPARTH.

Disordered regions lie at residues 1 to 76 (MDNR…AGTQ) and 99 to 157 (HRRA…MGAP). Basic and acidic residues predominate over residues 49–61 (EVRDIGERREPDR). Residues 62–73 (AQQQPQKPAVAA) show a composition bias toward low complexity. The segment covering 105–132 (ARSQTAQKSPRTLTPVPTSAPSLPQTPA) has biased composition (polar residues). Over residues 146–157 (APGPEPAPMGAP) the composition is skewed to pro residues. Positions 198-225 (EPEEQSLQKLYQNREKSEEQLTLKQEEA) form a coiled coil. One can recognise an EF-hand domain in the interval 255-290 (VTLAQVEDALMSADVNGDGRVDFKDFLAVMTDTRRF). D268, N270, D272, R274, and D279 together coordinate Ca(2+). The tract at residues 424-469 (YALDQCTPPGLDPDIRSPFFQSGSQGNREHNSDSRKWLSSVPARTH) is disordered. Over residues 450-459 (NREHNSDSRK) the composition is skewed to basic and acidic residues.

In terms of biological role, involved in the differentiation of haploid spermatids. This is Spermatogenesis-associated protein 21 (SPATA21) from Homo sapiens (Human).